The primary structure comprises 468 residues: Sushi repeat-containing protein SRPX2 (468 aa).

Residues 1–25 form the signal peptide; it reads MMTSPLTQRGALSLLLLLMPAVTPT. 3 Sushi domains span residues 72 to 122, 123 to 181, and 265 to 324; these read ATCY…YCRQ, IRCH…VCVD, and RRCP…VCTP. Disulfide bonds link Cys74–Cys108, Cys94–Cys120, Cys125–Cys166, and Cys152–Cys179. The HYR domain maps to 180 to 264; sequence VDIDPPKIRC…SCKFIVKVQV (85 aa). Disulfide bonds link Cys267-Cys309 and Cys295-Cys322.

As to quaternary structure, forms homooligomers. Interacts with PLAUR (via the UPAR/Ly6 domains), ADAMTS4 and CTSB. Interacts with HGF; the interaction increases the mitogenic activity of HGF. In terms of processing, contains chondroitin sulfate chains. Expressed in angiogenic endothelial cells (at protein level).

Its subcellular location is the secreted. The protein localises to the cytoplasm. It is found in the cell surface. The protein resides in the synapse. In terms of biological role, acts as a ligand for the urokinase plasminogen activator surface receptor. Plays a role in angiogenesis by inducing endothelial cell migration and the formation of vascular network (cords). Involved in cellular migration and adhesion. Increases the phosphorylation levels of FAK. Interacts with and increases the mitogenic activity of HGF. Promotes synapse formation. Required for ultrasonic vocalizations. In Mus musculus (Mouse), this protein is Sushi repeat-containing protein SRPX2 (Srpx2).